The sequence spans 238 residues: Phosphoribosylaminoimidazole-succinocarboxamide synthase (238 aa).

It belongs to the SAICAR synthetase family.

The catalysed reaction is 5-amino-1-(5-phospho-D-ribosyl)imidazole-4-carboxylate + L-aspartate + ATP = (2S)-2-[5-amino-1-(5-phospho-beta-D-ribosyl)imidazole-4-carboxamido]succinate + ADP + phosphate + 2 H(+). The protein operates within purine metabolism; IMP biosynthesis via de novo pathway; 5-amino-1-(5-phospho-D-ribosyl)imidazole-4-carboxamide from 5-amino-1-(5-phospho-D-ribosyl)imidazole-4-carboxylate: step 1/2. This Persephonella marina (strain DSM 14350 / EX-H1) protein is Phosphoribosylaminoimidazole-succinocarboxamide synthase.